A 456-amino-acid polypeptide reads, in one-letter code: Glycosyl hydrolase family 109 protein 2 (456 aa).

The segment at residues Met-1 to Gly-33 is a signal peptide (tat-type signal). Residues Glu-63–Arg-64, Asp-85, Trp-134–His-137, Glu-154–Val-155, and Asn-183 each bind NAD(+). Substrate contacts are provided by residues Tyr-212, Arg-231, Tyr-243 to His-246, and Tyr-325. Tyr-243 provides a ligand contact to NAD(+).

It belongs to the Gfo/Idh/MocA family. Glycosyl hydrolase 109 subfamily. NAD(+) is required as a cofactor. Post-translationally, predicted to be exported by the Tat system. The position of the signal peptide cleavage has not been experimentally proven.

Its function is as follows. Glycosidase. In Shewanella sp. (strain MR-4), this protein is Glycosyl hydrolase family 109 protein 2.